Reading from the N-terminus, the 233-residue chain is DNA repair protein RecO (233 aa).

It belongs to the RecO family.

Functionally, involved in DNA repair and RecF pathway recombination. This Pseudomonas paraeruginosa (strain DSM 24068 / PA7) (Pseudomonas aeruginosa (strain PA7)) protein is DNA repair protein RecO.